A 275-amino-acid polypeptide reads, in one-letter code: Small ribosomal subunit protein uS3 (275 aa).

The KH type-2 domain occupies 38–106 (IRRMMTSGME…QVQLNILEVK (69 aa)). Residues 216–228 (NAAARAGNRPARG) show a composition bias toward low complexity. The segment at 216 to 275 (NAAARAGNRPARGGADRPARGGRGGERGGRGRKPQQAPAAEAPKAEAPAAAPAESTGTEA) is disordered. The span at 229–244 (GADRPARGGRGGERGG) shows a compositional bias: basic and acidic residues. The span at 249–268 (PQQAPAAEAPKAEAPAAAPA) shows a compositional bias: low complexity.

This sequence belongs to the universal ribosomal protein uS3 family. In terms of assembly, part of the 30S ribosomal subunit. Forms a tight complex with proteins S10 and S14.

Functionally, binds the lower part of the 30S subunit head. Binds mRNA in the 70S ribosome, positioning it for translation. The sequence is that of Small ribosomal subunit protein uS3 from Streptomyces avermitilis (strain ATCC 31267 / DSM 46492 / JCM 5070 / NBRC 14893 / NCIMB 12804 / NRRL 8165 / MA-4680).